The following is a 227-amino-acid chain: Cytidylate kinase (227 aa).

12–20 (GPSGAGKGT) lines the ATP pocket.

Belongs to the cytidylate kinase family. Type 1 subfamily.

It is found in the cytoplasm. It carries out the reaction CMP + ATP = CDP + ADP. It catalyses the reaction dCMP + ATP = dCDP + ADP. The protein is Cytidylate kinase of Shigella boydii serotype 4 (strain Sb227).